Reading from the N-terminus, the 576-residue chain is Formate--tetrahydrofolate ligase 1 (576 aa).

Residue 69–76 (TPLGEGKT) coordinates ATP.

Belongs to the formate--tetrahydrofolate ligase family.

It carries out the reaction (6S)-5,6,7,8-tetrahydrofolate + formate + ATP = (6R)-10-formyltetrahydrofolate + ADP + phosphate. The protein operates within one-carbon metabolism; tetrahydrofolate interconversion. In Rubrobacter xylanophilus (strain DSM 9941 / JCM 11954 / NBRC 16129 / PRD-1), this protein is Formate--tetrahydrofolate ligase 1.